A 128-amino-acid chain; its full sequence is Cystatin-12 (128 aa).

The N-terminal stretch at 1-21 (MLWKSVLPVALIVLGIHDCSF) is a signal peptide. 2 cysteine pairs are disulfide-bonded: C82/C92 and C105/C125. N122 carries an N-linked (GlcNAc...) asparagine glycan.

This sequence belongs to the cystatin family.

Its subcellular location is the secreted. May play a specialized role in spermatogenesis. This is Cystatin-12 (Cst12) from Rattus norvegicus (Rat).